We begin with the raw amino-acid sequence, 79 residues long: Sulfur carrier protein TusA (79 aa).

Cys17 serves as the catalytic Cysteine persulfide intermediate.

Belongs to the sulfur carrier protein TusA family.

The protein localises to the cytoplasm. In terms of biological role, sulfur carrier protein which probably makes part of a sulfur-relay system. This chain is Sulfur carrier protein TusA, found in Haemophilus influenzae (strain 86-028NP).